Consider the following 88-residue polypeptide: Alpha-latrotoxin associated low molecular weight protein (88 aa).

Residues 1–18 (MSKLFFVAFLCLIISVFA) form the signal peptide.

The protein belongs to the arthropod CHH/MIH/GIH/VIH hormone family. In terms of tissue distribution, expressed by the venom gland.

It is found in the secreted. Functionally, may increase the toxicity of alpha-latrotoxin and/or other venom components. Is non-toxic to mice and to the cockroach Periplaneta americana. The polypeptide is Alpha-latrotoxin associated low molecular weight protein (Latrodectus hesperus (Western black widow spider)).